The sequence spans 421 residues: Tryptophan synthase beta chain (421 aa).

At lysine 112 the chain carries N6-(pyridoxal phosphate)lysine.

This sequence belongs to the TrpB family. Tetramer of two alpha and two beta chains. Pyridoxal 5'-phosphate serves as cofactor.

It carries out the reaction (1S,2R)-1-C-(indol-3-yl)glycerol 3-phosphate + L-serine = D-glyceraldehyde 3-phosphate + L-tryptophan + H2O. It functions in the pathway amino-acid biosynthesis; L-tryptophan biosynthesis; L-tryptophan from chorismate: step 5/5. Functionally, the beta subunit is responsible for the synthesis of L-tryptophan from indole and L-serine. The protein is Tryptophan synthase beta chain (trpB) of Mycobacterium bovis (strain ATCC BAA-935 / AF2122/97).